The chain runs to 160 residues: NADH-quinone oxidoreductase subunit I (160 aa).

2 4Fe-4S ferredoxin-type domains span residues 51 to 80 (RRYK…IEAA) and 91 to 120 (TKYD…EGPN). The [4Fe-4S] cluster site is built by Cys-60, Cys-63, Cys-66, Cys-70, Cys-100, Cys-103, Cys-106, and Cys-110.

Belongs to the complex I 23 kDa subunit family. In terms of assembly, NDH-1 is composed of 14 different subunits. Subunits NuoA, H, J, K, L, M, N constitute the membrane sector of the complex. [4Fe-4S] cluster is required as a cofactor.

It localises to the cell inner membrane. The enzyme catalyses a quinone + NADH + 5 H(+)(in) = a quinol + NAD(+) + 4 H(+)(out). Its function is as follows. NDH-1 shuttles electrons from NADH, via FMN and iron-sulfur (Fe-S) centers, to quinones in the respiratory chain. The immediate electron acceptor for the enzyme in this species is believed to be ubiquinone. Couples the redox reaction to proton translocation (for every two electrons transferred, four hydrogen ions are translocated across the cytoplasmic membrane), and thus conserves the redox energy in a proton gradient. This chain is NADH-quinone oxidoreductase subunit I, found in Neorickettsia sennetsu (strain ATCC VR-367 / Miyayama) (Ehrlichia sennetsu).